Reading from the N-terminus, the 471-residue chain is Putative multidrug resistance protein MdtD (471 aa).

Topologically, residues 1–11 are periplasmic; sequence MTELPDSTRWQ. A helical membrane pass occupies residues 12-32; that stretch reads LWIVAFGFFMQSLDTTIVNTA. Topologically, residues 33–48 are cytoplasmic; that stretch reads LPSMAQSLGESPLHMH. Residues 49-69 form a helical membrane-spanning segment; it reads MVIVSYVLTVAVMLPASGWLA. Residues 70 to 76 lie on the Periplasmic side of the membrane; sequence DKVGVRN. Residues 77–97 form a helical membrane-spanning segment; that stretch reads IFFTAIVLFTLGSLFCALSGT. Residues 98–101 lie on the Cytoplasmic side of the membrane; the sequence is LNEL. A helical transmembrane segment spans residues 102–124; sequence LLARALQGVGGAMMVPVGRLTVM. Topologically, residues 125–137 are periplasmic; that stretch reads KIVPREQYMAAMT. The helical transmembrane segment at 138-158 threads the bilayer; the sequence is FVTLPGQVGPLLGPALGGLLV. Topologically, residues 159-164 are cytoplasmic; the sequence is EYASWH. Residues 165 to 185 traverse the membrane as a helical segment; it reads WIFLINIPVGIIGAIATLLLM. Residues 186–196 are Periplasmic-facing; the sequence is PNYTMQTRRFD. A helical membrane pass occupies residues 197–217; sequence LSGFLLLAVGMAVLTLALDGS. Residues 218–224 are Cytoplasmic-facing; the sequence is KGTGLSP. The chain crosses the membrane as a helical span at residues 225–245; that stretch reads LAIAGLVAVGVVALVLYLLHA. At 246 to 262 the chain is on the periplasmic side; it reads RNNNRALFSLKLFRTRT. The helical transmembrane segment at 263-283 threads the bilayer; it reads FSLGLAGSFAGRIGSGMLPFM. Residues 284–285 are Cytoplasmic-facing; it reads TP. A helical membrane pass occupies residues 286-306; sequence VFLQIGLGFSPFHAGLMMIPM. At 307-341 the chain is on the periplasmic side; the sequence is VLGSMGMKRIVVQVVNRFGYRRVLVATTLGLSLIT. Residues 342 to 362 traverse the membrane as a helical segment; that stretch reads LLFMTTALLGWYYVLPFVLFL. The Cytoplasmic portion of the chain corresponds to 363–395; the sequence is QGMVNSTRFSSMNTLTLKDLPDNLASSGNSLLS. A helical transmembrane segment spans residues 396–416; sequence MIMQLSMSIGVTIAGLLLGLF. At 417–430 the chain is on the periplasmic side; the sequence is GSQHVSVDSGTTQT. A helical membrane pass occupies residues 431–451; it reads VFMYTWLSMAFIIALPAFIFA. At 452 to 471 the chain is on the cytoplasmic side; it reads RVPNDTHQNVAISRRKRSAQ.

The protein belongs to the major facilitator superfamily. TCR/Tet family.

Its subcellular location is the cell inner membrane. In Shigella sonnei (strain Ss046), this protein is Putative multidrug resistance protein MdtD.